Here is a 151-residue protein sequence, read N- to C-terminus: Urease accessory protein UreE (151 aa).

Belongs to the UreE family.

The protein resides in the cytoplasm. Involved in urease metallocenter assembly. Binds nickel. Probably functions as a nickel donor during metallocenter assembly. The chain is Urease accessory protein UreE from Lachnoclostridium phytofermentans (strain ATCC 700394 / DSM 18823 / ISDg) (Clostridium phytofermentans).